We begin with the raw amino-acid sequence, 202 residues long: Pyridoxal 5'-phosphate synthase subunit PdxT (202 aa).

52 to 54 is an L-glutamine binding site; the sequence is GES. Residue cysteine 84 is the Nucleophile of the active site. Residues arginine 120 and 148–149 contribute to the L-glutamine site; that span reads IR. Catalysis depends on charge relay system residues histidine 185 and glutamate 187.

Belongs to the glutaminase PdxT/SNO family. In the presence of PdxS, forms a dodecamer of heterodimers. Only shows activity in the heterodimer.

It carries out the reaction aldehydo-D-ribose 5-phosphate + D-glyceraldehyde 3-phosphate + L-glutamine = pyridoxal 5'-phosphate + L-glutamate + phosphate + 3 H2O + H(+). The enzyme catalyses L-glutamine + H2O = L-glutamate + NH4(+). It participates in cofactor biosynthesis; pyridoxal 5'-phosphate biosynthesis. Functionally, catalyzes the hydrolysis of glutamine to glutamate and ammonia as part of the biosynthesis of pyridoxal 5'-phosphate. The resulting ammonia molecule is channeled to the active site of PdxS. The protein is Pyridoxal 5'-phosphate synthase subunit PdxT of Methanopyrus kandleri (strain AV19 / DSM 6324 / JCM 9639 / NBRC 100938).